The primary structure comprises 116 residues: MGLPKEHRLKHWRDFKTIYSQGKRFRGDALAIILLPQPAAPTKIGISISRKVSKKAVVRNLIKRRIRHACRTLLPQIQPGWHIVIAVRYNARECEYEHFLQELKRLLIQAEVFHGH.

It belongs to the RnpA family. Consists of a catalytic RNA component (M1 or rnpB) and a protein subunit.

The catalysed reaction is Endonucleolytic cleavage of RNA, removing 5'-extranucleotides from tRNA precursor.. Its function is as follows. RNaseP catalyzes the removal of the 5'-leader sequence from pre-tRNA to produce the mature 5'-terminus. It can also cleave other RNA substrates such as 4.5S RNA. The protein component plays an auxiliary but essential role in vivo by binding to the 5'-leader sequence and broadening the substrate specificity of the ribozyme. The sequence is that of Ribonuclease P protein component from Picosynechococcus sp. (strain ATCC 27264 / PCC 7002 / PR-6) (Agmenellum quadruplicatum).